Consider the following 243-residue polypeptide: 3-deoxy-manno-octulosonate cytidylyltransferase (243 aa).

Belongs to the KdsB family.

Its subcellular location is the cytoplasm. It carries out the reaction 3-deoxy-alpha-D-manno-oct-2-ulosonate + CTP = CMP-3-deoxy-beta-D-manno-octulosonate + diphosphate. It participates in nucleotide-sugar biosynthesis; CMP-3-deoxy-D-manno-octulosonate biosynthesis; CMP-3-deoxy-D-manno-octulosonate from 3-deoxy-D-manno-octulosonate and CTP: step 1/1. Its pathway is bacterial outer membrane biogenesis; lipopolysaccharide biosynthesis. Its function is as follows. Activates KDO (a required 8-carbon sugar) for incorporation into bacterial lipopolysaccharide in Gram-negative bacteria. The protein is 3-deoxy-manno-octulosonate cytidylyltransferase of Helicobacter pylori (strain G27).